Reading from the N-terminus, the 226-residue chain is Large ribosomal subunit protein uL3 (226 aa).

The interval N136–P162 is disordered. Polar residues predominate over residues F137–M158. At Q160 the chain carries N5-methylglutamine.

It belongs to the universal ribosomal protein uL3 family. Part of the 50S ribosomal subunit. Forms a cluster with proteins L14 and L19. In terms of processing, methylated by PrmB.

In terms of biological role, one of the primary rRNA binding proteins, it binds directly near the 3'-end of the 23S rRNA, where it nucleates assembly of the 50S subunit. In Methylibium petroleiphilum (strain ATCC BAA-1232 / LMG 22953 / PM1), this protein is Large ribosomal subunit protein uL3.